The chain runs to 180 residues: uncharacterized protein (180 aa).

A run of 6 helical transmembrane segments spans residues 4–24 (KSNIKLILATDLLAVLILSLF), 25–45 (IKNFKMVLAFLLAVFVIWLFI), 57–77 (NLLAMSVGFIEGILIFLGIIY), 81–101 (FLDITLGIFAILILIVMGILF), 124–144 (FLTLISIFGMLLTIYVFLLIL), and 156–176 (IIRTIMLVITANMFIIEFYTF).

The protein resides in the cell membrane. This is an uncharacterized protein from Methanocaldococcus jannaschii (strain ATCC 43067 / DSM 2661 / JAL-1 / JCM 10045 / NBRC 100440) (Methanococcus jannaschii).